Consider the following 360-residue polypeptide: D-xylose 1-dehydrogenase [NADP(+)] (360 aa).

This sequence belongs to the Gfo/Idh/MocA family. In terms of assembly, homotretramer.

The catalysed reaction is D-xylofuranose + NADP(+) = D-xylono-1,4-lactone + NADPH + H(+). NADP-dependent D-xylose dehydrogenase involved in the degradation of D-xylose, a major component of hemicelluloses such as xylan. In addition to D-xylose, oxidizes D-ribose at similar kinetic constants, whereas D-glucose is oxidized with about 70-fold lower catalytic efficiency. This is D-xylose 1-dehydrogenase [NADP(+)] (gfo6) from Haloarcula marismortui (strain ATCC 43049 / DSM 3752 / JCM 8966 / VKM B-1809) (Halobacterium marismortui).